The following is a 287-amino-acid chain: Pyridoxal kinase PdxY (287 aa).

Substrate-binding positions include Ser10 and Thr45 to Gln46. ATP is bound by residues Asp112, Ala144, Glu149, Lys182, and Arg209 to Val212. Residue Asp224 coordinates substrate.

This sequence belongs to the pyridoxine kinase family. PdxY subfamily. In terms of assembly, homodimer. It depends on Mg(2+) as a cofactor.

It carries out the reaction pyridoxal + ATP = pyridoxal 5'-phosphate + ADP + H(+). Its pathway is cofactor metabolism; pyridoxal 5'-phosphate salvage; pyridoxal 5'-phosphate from pyridoxal: step 1/1. In terms of biological role, pyridoxal kinase involved in the salvage pathway of pyridoxal 5'-phosphate (PLP). Catalyzes the phosphorylation of pyridoxal to PLP. This chain is Pyridoxal kinase PdxY, found in Shigella boydii serotype 4 (strain Sb227).